We begin with the raw amino-acid sequence, 327 residues long: Malate dehydrogenase (327 aa).

12–18 (GAAGQIG) is an NAD(+) binding site. Residues arginine 93 and arginine 99 each coordinate substrate. NAD(+)-binding positions include asparagine 106, glutamine 113, and 130 to 132 (VGN). Residues asparagine 132 and arginine 163 each coordinate substrate. Histidine 188 functions as the Proton acceptor in the catalytic mechanism.

This sequence belongs to the LDH/MDH superfamily. MDH type 2 family.

It carries out the reaction (S)-malate + NAD(+) = oxaloacetate + NADH + H(+). Catalyzes the reversible oxidation of malate to oxaloacetate. The chain is Malate dehydrogenase from Cupriavidus necator (strain ATCC 17699 / DSM 428 / KCTC 22496 / NCIMB 10442 / H16 / Stanier 337) (Ralstonia eutropha).